The sequence spans 162 residues: ATP-dependent Clp protease adapter protein CLPS1, chloroplastic (162 aa).

The transit peptide at 1 to 58 directs the protein to the chloroplast; the sequence is MAASCLRPAPTASAQMMTRSPVAGLPRPCSALQRSGCTLQGAFGTFAPQTTRTFVVTW.

Belongs to the ClpS family.

Its subcellular location is the plastid. The protein resides in the chloroplast stroma. Functionally, small adapter protein that modulate the activity of plastid Clp protease system (CLPC). Probably involved in substrate selection for plastid CLPC. The chain is ATP-dependent Clp protease adapter protein CLPS1, chloroplastic from Chlamydomonas reinhardtii (Chlamydomonas smithii).